Reading from the N-terminus, the 311-residue chain is 4-hydroxy-tetrahydrodipicolinate synthase (311 aa).

Pyruvate is bound at residue threonine 51. The active-site Proton donor/acceptor is tyrosine 140. Lysine 168 functions as the Schiff-base intermediate with substrate in the catalytic mechanism. Position 209 (isoleucine 209) interacts with pyruvate.

The protein belongs to the DapA family. As to quaternary structure, homotetramer; dimer of dimers.

It is found in the cytoplasm. The enzyme catalyses L-aspartate 4-semialdehyde + pyruvate = (2S,4S)-4-hydroxy-2,3,4,5-tetrahydrodipicolinate + H2O + H(+). It participates in amino-acid biosynthesis; L-lysine biosynthesis via DAP pathway; (S)-tetrahydrodipicolinate from L-aspartate: step 3/4. Functionally, catalyzes the condensation of (S)-aspartate-beta-semialdehyde [(S)-ASA] and pyruvate to 4-hydroxy-tetrahydrodipicolinate (HTPA). This Streptococcus gordonii (strain Challis / ATCC 35105 / BCRC 15272 / CH1 / DL1 / V288) protein is 4-hydroxy-tetrahydrodipicolinate synthase.